A 693-amino-acid chain; its full sequence is DNA ligase (693 aa).

NAD(+) contacts are provided by residues 43–47 (DEEYD), 92–93 (SL), and Glu123. Lys125 functions as the N6-AMP-lysine intermediate in the catalytic mechanism. Residues Arg146, Glu180, Lys296, and Lys320 each contribute to the NAD(+) site. Cys414, Cys417, Cys433, and Cys438 together coordinate Zn(2+). Positions 595 to 684 (VKYDVLKGLT…AKLKGYNFDE (90 aa)) constitute a BRCT domain.

The protein belongs to the NAD-dependent DNA ligase family. LigA subfamily. The cofactor is Mg(2+). It depends on Mn(2+) as a cofactor.

It catalyses the reaction NAD(+) + (deoxyribonucleotide)n-3'-hydroxyl + 5'-phospho-(deoxyribonucleotide)m = (deoxyribonucleotide)n+m + AMP + beta-nicotinamide D-nucleotide.. Functionally, DNA ligase that catalyzes the formation of phosphodiester linkages between 5'-phosphoryl and 3'-hydroxyl groups in double-stranded DNA using NAD as a coenzyme and as the energy source for the reaction. It is essential for DNA replication and repair of damaged DNA. This Thermotoga neapolitana (strain ATCC 49049 / DSM 4359 / NBRC 107923 / NS-E) protein is DNA ligase.